The primary structure comprises 197 residues: ATP synthase protein MI25 (197 aa).

Residues 30–50 traverse the membrane as a helical segment; it reads ISIYNEEMIVARCFIGFLIFS.

Belongs to the ATPase protein MI25 family. F-type ATPases have 2 components, CF(1) - the catalytic core - and CF(0) - the membrane proton channel. CF(1) has five subunits: alpha(3), beta(3), gamma(1), delta(1), epsilon(1). CF(0) has three main subunits: a, b and c.

It is found in the mitochondrion membrane. This is one of the chains of the nonenzymatic component (CF(0) subunit) of the mitochondrial ATPase complex. The protein is ATP synthase protein MI25 of Oryza sativa subsp. indica (Rice).